Here is a 210-residue protein sequence, read N- to C-terminus: Transcriptional regulator DauR (210 aa).

Belongs to the DauR family.

Its function is as follows. DauR represses the dauBAR operon. This is Transcriptional regulator DauR from Pseudomonas aeruginosa (strain ATCC 15692 / DSM 22644 / CIP 104116 / JCM 14847 / LMG 12228 / 1C / PRS 101 / PAO1).